A 667-amino-acid polypeptide reads, in one-letter code: Ribosomal oxygenase 1 (667 aa).

Met-1 carries the N-acetylmethionine modification. A compositionally biased stretch (low complexity) spans 1–11 (MDGLRASAGLL). The interval 1–99 (MDGLRASAGL…ATGREPHGQL (99 aa)) is disordered. Composition is skewed to basic residues over residues 12–22 (RRGRLRRRRQQ) and 35–44 (RPRKIRRQLR). A phosphoserine mark is found at Ser-61, Ser-64, and Ser-108. The 146-residue stretch at 322 to 467 (CSLRLLCPQA…DFLEAVLPLA (146 aa)) folds into the JmjC domain. Positions 368, 370, and 433 each coordinate Fe cation.

Belongs to the ROX family. NO66 subfamily. In terms of assembly, interacts with SP7/OSX; the interaction is direct. Interacts with MYC. Interacts with PHF19; leading to its recruitment to H3K36me3 sites. Fe(2+) is required as a cofactor.

Its subcellular location is the nucleus. It is found in the nucleolus. The protein localises to the nucleoplasm. It carries out the reaction N(6),N(6)-dimethyl-L-lysyl(36)-[histone H3] + 2 2-oxoglutarate + 2 O2 = L-lysyl(36)-[histone H3] + 2 formaldehyde + 2 succinate + 2 CO2. The catalysed reaction is N(6)-methyl-L-lysyl-[protein] + 2-oxoglutarate + O2 = L-lysyl-[protein] + formaldehyde + succinate + CO2. It catalyses the reaction L-histidyl-[protein] + 2-oxoglutarate + O2 = (3S)-3-hydroxy-L-histidyl-[protein] + succinate + CO2. Functionally, oxygenase that can act as both a histone lysine demethylase and a ribosomal histidine hydroxylase. Specifically demethylates 'Lys-4' (H3K4me) and 'Lys-36' (H3K36me) of histone H3, thereby playing a central role in histone code. Preferentially demethylates trimethylated H3 'Lys-4' (H3K4me3) and monomethylated H3 'Lys-4' (H3K4me1) residues, while it has weaker activity for dimethylated H3 'Lys-36' (H3K36me2). Acts as a regulator of osteoblast differentiation via its interaction with SP7/OSX by demethylating H3K4me and H3K36me, thereby inhibiting SP7/OSX-mediated promoter activation. Also catalyzes demethylation of non-histone proteins, such as CGAS: demethylation of monomethylated CGAS promotes interaction between CGAS and PARP1, followed by PARP1 inactivation. Also catalyzes the hydroxylation of 60S ribosomal protein L8 on 'His-216', thereby playing a role in ribosome biogenesis. Participates in MYC-induced transcriptional activation. This chain is Ribosomal oxygenase 1 (RIOX1), found in Bos taurus (Bovine).